A 169-amino-acid chain; its full sequence is Disulfide bond formation protein B (169 aa).

Residues 1-13 are Cytoplasmic-facing; sequence MQSLISFAHSRLS. The chain crosses the membrane as a helical span at residues 14–30; it reads WGILALSALALESAALY. The Periplasmic portion of the chain corresponds to 31-48; that stretch reads FQHIMKLDPCVMCIYQRV. Cys40 and Cys43 are disulfide-bonded. A helical membrane pass occupies residues 49–64; the sequence is AVFGLLGAGLFGFMAP. The Cytoplasmic segment spans residues 65–71; it reads ANRVIRA. The chain crosses the membrane as a helical span at residues 72-89; the sequence is LGALLWGISAAWGLKLAL. Residues 90 to 144 lie on the Periplasmic side of the membrane; sequence ELVDMQNNPNPFSTCSFLPEFPSWLQLHEWLPSVFMPTGMCTDIPWEFAGVTMGE. A disulfide bridge links Cys104 with Cys130. A helical membrane pass occupies residues 145–163; sequence WMIVAFSVYLLAWLAFIVP. The Cytoplasmic segment spans residues 164 to 169; the sequence is MLKKSA.

Belongs to the DsbB family.

It is found in the cell inner membrane. Required for disulfide bond formation in some periplasmic proteins. Acts by oxidizing the DsbA protein. This is Disulfide bond formation protein B from Shewanella amazonensis (strain ATCC BAA-1098 / SB2B).